The following is a 169-amino-acid chain: Ureidoglycolate lyase (169 aa).

This sequence belongs to the ureidoglycolate lyase family. As to quaternary structure, homodimer. It depends on Ni(2+) as a cofactor.

The enzyme catalyses (S)-ureidoglycolate = urea + glyoxylate. It participates in nitrogen metabolism; (S)-allantoin degradation. In terms of biological role, catalyzes the catabolism of the allantoin degradation intermediate (S)-ureidoglycolate, generating urea and glyoxylate. Involved in the utilization of allantoin as nitrogen source. The chain is Ureidoglycolate lyase from Pseudomonas aeruginosa (strain LESB58).